Reading from the N-terminus, the 124-residue chain is Tax1-binding protein 3 (124 aa).

Residue Ser2 is modified to N-acetylserine. The PDZ domain occupies 15–112; the sequence is RVEIHKLRQG…EVVRLLVTRQ (98 aa). Residue Ser61 is modified to Phosphoserine.

As to quaternary structure, interacts (via its PDZ domain) with GLS2. Interacts (via its PDZ domain) with RTKN (via the C-terminal region); this interaction facilitates Rho-mediated activation of the FOS serum response element (SRE). Interacts (via its PDZ domain) with CTNNB1; this interaction inhibits the transcriptional activity of CTNNB1. Interacts with HTLV-1 TAX protein. Interacts (via PDZ domain) with ARHGEF16. Interacts (via PDZ domain) with KCNJ4 (via C-terminus). Competes with LIN7A for KCNJ4 binding. Interacts with ADGRB2. Ubiquitous. Detected in brain, heart, kidney, lung, small intestine and skeletal muscle. Detected in various cell lines including HeLa. Weakly expressed in peripheral blood leukocytes.

Its subcellular location is the cytoplasm. It is found in the nucleus. The protein localises to the cell membrane. Functionally, may regulate a number of protein-protein interactions by competing for PDZ domain binding sites. Binds CTNNB1 and may thereby act as an inhibitor of the Wnt signaling pathway. Competes with LIN7A for KCNJ4 binding, and thereby promotes KCNJ4 internalization. May play a role in the Rho signaling pathway. May play a role in activation of CDC42 by the viral protein HPV16 E6. The chain is Tax1-binding protein 3 from Homo sapiens (Human).